Here is a 138-residue protein sequence, read N- to C-terminus: uncharacterized protein (138 aa).

It to phage 186 CP81.

This is an uncharacterized protein from Salmonella typhimurium (strain LT2 / SGSC1412 / ATCC 700720).